The sequence spans 65 residues: Large ribosomal subunit protein bL33m (65 aa).

Residues Met1 to Phe8 constitute a mitochondrion transit peptide.

The protein belongs to the bacterial ribosomal protein bL33 family. In terms of assembly, component of the mitochondrial large ribosomal subunit (mt-LSU). Mature mammalian 55S mitochondrial ribosomes consist of a small (28S) and a large (39S) subunit. The 28S small subunit contains a 12S ribosomal RNA (12S mt-rRNA) and 30 different proteins. The 39S large subunit contains a 16S rRNA (16S mt-rRNA), a copy of mitochondrial valine transfer RNA (mt-tRNA(Val)), which plays an integral structural role, and 52 different proteins.

The protein localises to the mitochondrion. This chain is Large ribosomal subunit protein bL33m (MRPL33), found in Homo sapiens (Human).